The chain runs to 133 residues: FPRL1 inhibitory protein (133 aa).

An N-terminal signal peptide occupies residues 1–28; it reads MKKNITKTIIASTVIAAGLLTQTNDAKA.

This sequence belongs to the CHIPS/FLIPr family.

The protein resides in the secreted. Functionally, may be involved in countering the first line of host defense mechanisms. Impairs the leukocyte response to FPRL1 agonists by binding directly to host FPRL1. The sequence is that of FPRL1 inhibitory protein (flr) from Staphylococcus aureus (strain USA300).